The chain runs to 266 residues: Trypsin 5G1 (266 aa).

The signal sequence occupies residues methionine 1 to glycine 18. A propeptide spans alanine 19 to arginine 39 (activation peptide). The region spanning isoleucine 40–glycine 265 is the Peptidase S1 domain. A disulfide bridge links cysteine 66 with cysteine 82. Residues histidine 81 and aspartate 125 each act as charge relay system in the active site. Cystine bridges form between cysteine 190-cysteine 206 and cysteine 217-cysteine 241. The active-site Charge relay system is serine 221.

This sequence belongs to the peptidase S1 family. Midgut.

The protein resides in the secreted. The protein localises to the extracellular space. It catalyses the reaction Preferential cleavage: Arg-|-Xaa, Lys-|-Xaa.. In terms of biological role, major function may be to aid in digestion of the blood meal. The sequence is that of Trypsin 5G1 from Aedes aegypti (Yellowfever mosquito).